The primary structure comprises 355 residues: 3-dehydroquinate synthase (355 aa).

Residues 66 to 71 (SGETTK), 100 to 104 (GATGD), 124 to 125 (TT), K136, K145, and 163 to 166 (FLET) contribute to the NAD(+) site. Zn(2+) contacts are provided by E178, H242, and H256.

The protein belongs to the sugar phosphate cyclases superfamily. Dehydroquinate synthase family. Co(2+) is required as a cofactor. Zn(2+) serves as cofactor. It depends on NAD(+) as a cofactor.

It is found in the cytoplasm. The enzyme catalyses 7-phospho-2-dehydro-3-deoxy-D-arabino-heptonate = 3-dehydroquinate + phosphate. Its pathway is metabolic intermediate biosynthesis; chorismate biosynthesis; chorismate from D-erythrose 4-phosphate and phosphoenolpyruvate: step 2/7. Its function is as follows. Catalyzes the conversion of 3-deoxy-D-arabino-heptulosonate 7-phosphate (DAHP) to dehydroquinate (DHQ). The protein is 3-dehydroquinate synthase of Staphylococcus saprophyticus subsp. saprophyticus (strain ATCC 15305 / DSM 20229 / NCIMB 8711 / NCTC 7292 / S-41).